Reading from the N-terminus, the 163-residue chain is ATP synthase subunit b (163 aa).

Residues 10–29 traverse the membrane as a helical segment; it reads ALYQLLAFSVLLFFLSKFAL.

It belongs to the ATPase B chain family. F-type ATPases have 2 components, F(1) - the catalytic core - and F(0) - the membrane proton channel. F(1) has five subunits: alpha(3), beta(3), gamma(1), delta(1), epsilon(1). F(0) has three main subunits: a(1), b(2) and c(10-14). The alpha and beta chains form an alternating ring which encloses part of the gamma chain. F(1) is attached to F(0) by a central stalk formed by the gamma and epsilon chains, while a peripheral stalk is formed by the delta and b chains.

It is found in the cell membrane. In terms of biological role, f(1)F(0) ATP synthase produces ATP from ADP in the presence of a proton or sodium gradient. F-type ATPases consist of two structural domains, F(1) containing the extramembraneous catalytic core and F(0) containing the membrane proton channel, linked together by a central stalk and a peripheral stalk. During catalysis, ATP synthesis in the catalytic domain of F(1) is coupled via a rotary mechanism of the central stalk subunits to proton translocation. Functionally, component of the F(0) channel, it forms part of the peripheral stalk, linking F(1) to F(0). The sequence is that of ATP synthase subunit b from Alkalihalophilus pseudofirmus (strain ATCC BAA-2126 / JCM 17055 / OF4) (Bacillus pseudofirmus).